The following is a 489-amino-acid chain: Glucose-6-phosphate isomerase (489 aa).

Catalysis depends on Glu309, which acts as the Proton donor. Active-site residues include His340 and Lys459.

Belongs to the GPI family.

The protein resides in the cytoplasm. It catalyses the reaction alpha-D-glucose 6-phosphate = beta-D-fructose 6-phosphate. It participates in carbohydrate biosynthesis; gluconeogenesis. It functions in the pathway carbohydrate degradation; glycolysis; D-glyceraldehyde 3-phosphate and glycerone phosphate from D-glucose: step 2/4. Functionally, catalyzes the reversible isomerization of glucose-6-phosphate to fructose-6-phosphate. This is Glucose-6-phosphate isomerase from Idiomarina loihiensis (strain ATCC BAA-735 / DSM 15497 / L2-TR).